Reading from the N-terminus, the 71-residue chain is Conotoxin AbVIG (71 aa).

A signal peptide spans 1-17 (VLIIAVLFLTACQLTTA). A propeptide spanning residues 18-40 (ETSSRGKQKHRALRSTDKNSRMT) is cleaved from the precursor. Disulfide bonds link cysteine 43/cysteine 57, cysteine 50/cysteine 61, and cysteine 56/cysteine 68.

It belongs to the conotoxin O1 superfamily. Expressed by the venom duct.

The protein resides in the secreted. This is Conotoxin AbVIG from Conus abbreviatus (Abbreviated cone).